Consider the following 281-residue polypeptide: Bifunctional protein FolD (281 aa).

NADP(+) is bound by residues 165 to 167 (GRG), threonine 192, and valine 233.

This sequence belongs to the tetrahydrofolate dehydrogenase/cyclohydrolase family. Homodimer.

It carries out the reaction (6R)-5,10-methylene-5,6,7,8-tetrahydrofolate + NADP(+) = (6R)-5,10-methenyltetrahydrofolate + NADPH. The catalysed reaction is (6R)-5,10-methenyltetrahydrofolate + H2O = (6R)-10-formyltetrahydrofolate + H(+). Its pathway is one-carbon metabolism; tetrahydrofolate interconversion. In terms of biological role, catalyzes the oxidation of 5,10-methylenetetrahydrofolate to 5,10-methenyltetrahydrofolate and then the hydrolysis of 5,10-methenyltetrahydrofolate to 10-formyltetrahydrofolate. This chain is Bifunctional protein FolD, found in Mycobacteroides abscessus (strain ATCC 19977 / DSM 44196 / CCUG 20993 / CIP 104536 / JCM 13569 / NCTC 13031 / TMC 1543 / L948) (Mycobacterium abscessus).